The sequence spans 188 residues: Movement protein (188 aa).

The protein belongs to the tombusvirus/aureusvirus movement protein p22 family. Interacts with host protein HFI22. Phosphorylated.

It is found in the host membrane. Functionally, transports viral genome to neighboring plant cells directly through plasmosdesmata, without any budding. The movement protein allows efficient cell to cell propagation, by bypassing the host cell wall barrier. The sequence is that of Movement protein from Capsicum annuum (Capsicum pepper).